The following is a 58-amino-acid chain: MATLKVTQIGSPIRRSPDQRATLIGLGLNKMHRTRELKDTPDVRGMLRKVAHLVKVEN.

The protein belongs to the universal ribosomal protein uL30 family. Part of the 50S ribosomal subunit.

This is Large ribosomal subunit protein uL30 from Zymomonas mobilis subsp. mobilis (strain ATCC 31821 / ZM4 / CP4).